The following is a 163-amino-acid chain: Nucleotide-binding protein BPUM_1028 (163 aa).

It belongs to the YajQ family.

Its function is as follows. Nucleotide-binding protein. This is Nucleotide-binding protein BPUM_1028 from Bacillus pumilus (strain SAFR-032).